The sequence spans 455 residues: Argininosuccinate synthase (455 aa).

ATP contacts are provided by residues 17-25 (AFSGGLDTS) and Ala-43. Position 99 (Tyr-99) interacts with L-citrulline. ATP is bound by residues Gly-129 and Thr-131. L-aspartate contacts are provided by Thr-131, Asn-135, and Asp-136. Position 135 (Asn-135) interacts with L-citrulline. Residue Asp-136 coordinates ATP. Positions 139 and 192 each coordinate L-citrulline. Asp-194 contacts ATP. L-citrulline is bound by residues Thr-201, Glu-203, and Glu-280. Over residues 434–448 (TGLPQVDNNNLSSGR) the composition is skewed to polar residues. Positions 434 to 455 (TGLPQVDNNNLSSGRGLQDKRQ) are disordered.

This sequence belongs to the argininosuccinate synthase family. Type 2 subfamily. As to quaternary structure, homotetramer.

Its subcellular location is the cytoplasm. The enzyme catalyses L-citrulline + L-aspartate + ATP = 2-(N(omega)-L-arginino)succinate + AMP + diphosphate + H(+). It functions in the pathway amino-acid biosynthesis; L-arginine biosynthesis; L-arginine from L-ornithine and carbamoyl phosphate: step 2/3. This Yersinia pestis protein is Argininosuccinate synthase (argG).